A 3746-amino-acid polypeptide reads, in one-letter code: N-(5-amino-5-carboxypentanoyl)-L-cysteinyl-D-valine synthase (3746 aa).

The segment at 299-711 (EEVVERHEDK…GRADFQIKLR (413 aa)) is adenylation (A) domain 1. The 78-residue stretch at 818-895 (DLRGDTEIAL…RMADLLQNKQ (78 aa)) folds into the Carrier 1 domain. Ser-855 is modified (O-(pantetheine 4'-phosphoryl)serine). A condensation (C) domain 1 region spans residues 918–1372 (NIYLANSLQQ…YLSSIQLEQL (455 aa)). The tract at residues 1391-1801 (FENEASQKPD…GRNDFQVKIR (411 aa)) is adenylation (A) domain 2. Residues 1902–1979 (PPRSEIERSL…AQTHLILNDA (78 aa)) form the Carrier 2 domain. Ser-1939 bears the O-(pantetheine 4'-phosphoryl)serine mark. Residues 1994–2434 (QMIPVSRAQE…SELSAEGINE (441 aa)) form a condensation (C) domain 2 region. An adenylation (A) domain 3 region spans residues 2478–2883 (AFLAAEKIAV…GRGDLQIKMR (406 aa)). Residues 2991–3066 (PPRNIIEAKM…ALHDHVFMKD (76 aa)) enclose the Carrier 3 domain. Ser-3026 is modified (O-(pantetheine 4'-phosphoryl)serine). Residues 3084-3500 (GEAPLLPIQD…NKILDGRASQ (417 aa)) are epimerase (E) domain. A thioesterase (TE) domain region spans residues 3530–3732 (TLFLLPPGEG…FSWVGNPQQV (203 aa)).

Belongs to the NRP synthetase family. The cofactor is pantetheine 4'-phosphate. Requires Mg(2+) as cofactor.

It is found in the cytoplasm. Its subcellular location is the cytosol. It localises to the vacuole membrane. The catalysed reaction is L-2-aminoadipate + L-valine + L-cysteine + 3 ATP + H2O = N-[(5S)-5-amino-5-carboxypentanoyl]-L-cysteinyl-D-valine + 3 AMP + 3 diphosphate + 3 H(+). Its pathway is antibiotic biosynthesis; penicillin G biosynthesis; penicillin G from L-alpha-aminoadipate and L-cysteine and L-valine: step 1/3. Its function is as follows. Nonribosomal peptide synthetase; part of the gene cluster that mediates the biosynthesis of penicillin, the world's most important antibiotic. The trimodular NRPS acvA produces the tripeptide N-[(5S)-5-amino-5-carboxypentanoyl]-L-cysteinyl-D-valine (LLD-ACV or ACV) via condensation of the 3 residues L-2-aminoadipate, L-cysteine and L-valine. The precursor amino acids for penicillin biosynthesis are withdrawn from the vacuolar amino acid pool by the MFS-type transporter penV. Each of the constituent amino acids of the tripeptide ACV are activated as aminoacyl-adenylates with peptide bonds formed through the participation of amino acid thioester intermediates. The penicillin biosynthesis occurs via 3 enzymatic steps, the first corresponding to the production of the tripeptide N-[(5S)-5-amino-5-carboxypentanoyl]-L-cysteinyl-D-valine (LLD-ACV or ACV) by the NRPS acvA. The tripeptide ACV is then cyclized to isopenicillin N (IPN) by the isopenicillin N synthase ipnA that forms the beta-lactam nucleus. Finally, the alpha-aminoadipyl side chain is exchanged for phenylacetic acid by the isopenicillin N acyltransferase aatA to yield penicillin in the peroxisomal matrix. The polypeptide is N-(5-amino-5-carboxypentanoyl)-L-cysteinyl-D-valine synthase (Penicillium chrysogenum (Penicillium notatum)).